A 366-amino-acid chain; its full sequence is Peptide chain release factor 2 (366 aa).

Gln-249 is subject to N5-methylglutamine.

This sequence belongs to the prokaryotic/mitochondrial release factor family. Post-translationally, methylated by PrmC. Methylation increases the termination efficiency of RF2.

It localises to the cytoplasm. Its function is as follows. Peptide chain release factor 2 directs the termination of translation in response to the peptide chain termination codons UGA and UAA. The protein is Peptide chain release factor 2 of Petrotoga mobilis (strain DSM 10674 / SJ95).